The chain runs to 350 residues: Probable dual-specificity RNA methyltransferase RlmN (350 aa).

The active-site Proton acceptor is the glutamate 91. Residues 97–327 (YHHGNSVCIS…VTIRREMGRD (231 aa)) enclose the Radical SAM core domain. Residues cysteine 104 and cysteine 332 are joined by a disulfide bond. Positions 111, 115, and 118 each coordinate [4Fe-4S] cluster. Residues 158–159 (GE), serine 190, 213–215 (SLH), and asparagine 289 each bind S-adenosyl-L-methionine. The active-site S-methylcysteine intermediate is cysteine 332.

This sequence belongs to the radical SAM superfamily. RlmN family. [4Fe-4S] cluster serves as cofactor.

The protein localises to the cytoplasm. It catalyses the reaction adenosine(2503) in 23S rRNA + 2 reduced [2Fe-2S]-[ferredoxin] + 2 S-adenosyl-L-methionine = 2-methyladenosine(2503) in 23S rRNA + 5'-deoxyadenosine + L-methionine + 2 oxidized [2Fe-2S]-[ferredoxin] + S-adenosyl-L-homocysteine. The catalysed reaction is adenosine(37) in tRNA + 2 reduced [2Fe-2S]-[ferredoxin] + 2 S-adenosyl-L-methionine = 2-methyladenosine(37) in tRNA + 5'-deoxyadenosine + L-methionine + 2 oxidized [2Fe-2S]-[ferredoxin] + S-adenosyl-L-homocysteine. Its function is as follows. Specifically methylates position 2 of adenine 2503 in 23S rRNA and position 2 of adenine 37 in tRNAs. The sequence is that of Probable dual-specificity RNA methyltransferase RlmN from Lachnospira eligens (strain ATCC 27750 / DSM 3376 / VPI C15-48 / C15-B4) (Eubacterium eligens).